The following is a 252-amino-acid chain: Imidazole glycerol phosphate synthase subunit HisF (252 aa).

Active-site residues include D11 and D130.

This sequence belongs to the HisA/HisF family. Heterodimer of HisH and HisF.

The protein resides in the cytoplasm. The enzyme catalyses 5-[(5-phospho-1-deoxy-D-ribulos-1-ylimino)methylamino]-1-(5-phospho-beta-D-ribosyl)imidazole-4-carboxamide + L-glutamine = D-erythro-1-(imidazol-4-yl)glycerol 3-phosphate + 5-amino-1-(5-phospho-beta-D-ribosyl)imidazole-4-carboxamide + L-glutamate + H(+). The protein operates within amino-acid biosynthesis; L-histidine biosynthesis; L-histidine from 5-phospho-alpha-D-ribose 1-diphosphate: step 5/9. IGPS catalyzes the conversion of PRFAR and glutamine to IGP, AICAR and glutamate. The HisF subunit catalyzes the cyclization activity that produces IGP and AICAR from PRFAR using the ammonia provided by the HisH subunit. This is Imidazole glycerol phosphate synthase subunit HisF from Bacillus cytotoxicus (strain DSM 22905 / CIP 110041 / 391-98 / NVH 391-98).